The sequence spans 322 residues: Elongation factor Ts, mitochondrial (322 aa).

This sequence belongs to the EF-Ts family.

Its subcellular location is the mitochondrion. Its function is as follows. Associates with the EF-Tu.GDP complex and induces the exchange of GDP to GTP. It remains bound to the aminoacyl-tRNA.EF-Tu.GTP complex up to the GTP hydrolysis stage on the ribosome. The polypeptide is Elongation factor Ts, mitochondrial (Chlamydomonas reinhardtii (Chlamydomonas smithii)).